A 776-amino-acid polypeptide reads, in one-letter code: MELHFGSCLSGCLALLVLLPSLSLAQYEGWPYQLQYPEYFQQPAPEHHQRQVPSDVVKIQVRLAGQKRKHNEGRVEVYYEGQWGTVCDDDFSIHAAHVVCRQVGYVEAKSWAASSSYGPGEGPIWLDNIYCTGKESTLASCSSNGWGVTDCKHTEDVGVVCSEKRIPGFKFDNSLINQIESLNIQVEDIRIRPILSAFRHRKPVTEGYVEVKEGKAWKQICNKHWTAKNSHVVCGMFGFPAEKTYNPKAYKTFASRRKLRYWKFSMNCTGTEAHISSCKLGPSVTRDPVKNATCENGQPAVVSCVPSQIFSPDGPSRFRKAYKPEQPLVRLRGGAQVGEGRVEVLKNGEWGTICDDKWDLVSASVVCRELGFGTAKEAITGSRLGQGIGPIHLNEVQCTGTEKSIIDCKFNTESQGCNHEEDAGVRCNIPIMGFQKKVRLNGGRNPYEGRVEVLTERNGSLVWGTVCGQNWGIVEAMVVCRQLGLGFASNAFQETWYWHGNIFANNVVMSGVKCSGTELSLAHCRHDEEVACPEGGVRFGAGVACSETAPDLVLNAEIVQQTAYLEDRPMSLLQCAMEENCLSASAVHTDPTRGHRRLLRFSSQIHNNGQSDFRPKNGRHAWIWHDCHRHYHSMEVFTYYDLLSLNGTKVAEGHKASFCLEDTECEGDIQKSYECANFGEQGITMGCWDMYRHDIDCQWIDITDVPPGDYLFQVVINPNYEVPESDFSNNIMKCRSRYDGYRIWMYNCHVGGAFSEETEQKFEHFSGLLNNQLSVQ.

The N-terminal stretch at 1 to 25 is a signal peptide; it reads MELHFGSCLSGCLALLVLLPSLSLA. SRCR domains are found at residues 61 to 162, 191 to 305, 329 to 428, and 438 to 546; these read VRLA…VVCS, IRPI…VSCV, VRLR…VRCN, and VRLN…VACS. Disulfide bonds link Cys87–Cys151, Cys100–Cys161, Cys131–Cys141, Cys221–Cys294, Cys234–Cys304, Cys268–Cys278, Cys354–Cys417, Cys367–Cys427, and Cys398–Cys408. The N-linked (GlcNAc...) asparagine glycan is linked to Asn267. Asn291 is a glycosylation site (N-linked (GlcNAc...) asparagine). Asn458 is a glycosylation site (N-linked (GlcNAc...) asparagine). Cystine bridges form between Cys467–Cys532, Cys480–Cys545, and Cys514–Cys524. The tract at residues 550–753 is lysyl-oxidase like; the sequence is PDLVLNAEIV…WMYNCHVGGA (204 aa). Residues Asp551 and Leu552 each contribute to the Ca(2+) site. Cystine bridges form between Cys575/Cys627, Cys581/Cys697, Cys659/Cys675, and Cys665/Cys687. Cu cation contacts are provided by His628, His630, and His632. A glycan (N-linked (GlcNAc...) asparagine) is linked at Asn646. The lysine tyrosylquinone (Lys-Tyr) cross-link spans 655-691; it reads KASFCLEDTECEGDIQKSYECANFGEQGITMGCWDMY. Tyr691 carries the post-translational modification 2',4',5'-topaquinone. Positions 724, 726, 729, and 730 each coordinate Ca(2+). A disulfide bridge connects residues Cys734 and Cys748.

It belongs to the lysyl oxidase family. As to quaternary structure, component of some chromatin repressor complex. Interacts with SNAI1. Interacts with TAF10. Interacts with HSPA5. Interacts with EFEMP2. Cu cation is required as a cofactor. It depends on lysine tyrosylquinone residue as a cofactor. Post-translationally, the lysine tyrosylquinone cross-link (LTQ) is generated by condensation of the epsilon-amino group of a lysine with a topaquinone produced by oxidation of tyrosine. In terms of processing, N-glycosylated. N-glycosylation on Asn-458 and Asn-646 may be essential for proper folding and secretion; may be composed of a fucosylated carbohydrates attached to a trimannose N-linked glycan core. Ubiquitous. Highest expression in skin, lung and thymus. Present in chondrocytes: mainly expressed by chondrocytes in healing fractures and in epiphyseal growth plates (at protein level).

The protein localises to the secreted. Its subcellular location is the extracellular space. It localises to the extracellular matrix. It is found in the basement membrane. The protein resides in the nucleus. The protein localises to the chromosome. Its subcellular location is the endoplasmic reticulum. It catalyses the reaction L-lysyl-[protein] + O2 + H2O = (S)-2-amino-6-oxohexanoyl-[protein] + H2O2 + NH4(+). With respect to regulation, specifically inhibited by a mouse monoclonal antibody AB0023, inhibition occurs in a non-competitive manner. Mediates the post-translational oxidative deamination of lysine residues on target proteins leading to the formation of deaminated lysine (allysine). Acts as a transcription corepressor and specifically mediates deamination of trimethylated 'Lys-4' of histone H3 (H3K4me3), a specific tag for epigenetic transcriptional activation. Shows no activity against histone H3 when it is trimethylated on 'Lys-9' (H3K9me3) or 'Lys-27' (H3K27me3) or when 'Lys-4' is monomethylated (H3K4me1) or dimethylated (H3K4me2). Also mediates deamination of methylated TAF10, a member of the transcription factor IID (TFIID) complex, which induces release of TAF10 from promoters, leading to inhibition of TFIID-dependent transcription. LOXL2-mediated deamination of TAF10 results in transcriptional repression of genes required for embryonic stem cell pluripotency including POU5F1/OCT4, NANOG, KLF4 and SOX2. Involved in epithelial to mesenchymal transition (EMT) via interaction with SNAI1 and participates in repression of E-cadherin, probably by mediating deamination of histone H3. During EMT, involved with SNAI1 in negatively regulating pericentromeric heterochromatin transcription. SNAI1 recruits LOXL2 to pericentromeric regions to oxidize histone H3 and repress transcription which leads to release of heterochromatin component CBX5/HP1A, enabling chromatin reorganization and acquisition of mesenchymal traits. Interacts with the endoplasmic reticulum protein HSPA5 which activates the IRE1-XBP1 pathway of the unfolded protein response, leading to expression of several transcription factors involved in EMT and subsequent EMT induction. When secreted into the extracellular matrix, promotes cross-linking of extracellular matrix proteins by mediating oxidative deamination of peptidyl lysine residues in precursors to fibrous collagen and elastin. Acts as a regulator of sprouting angiogenesis, probably via collagen IV scaffolding. Acts as a regulator of chondrocyte differentiation, probably by regulating expression of factors that control chondrocyte differentiation. In Mus musculus (Mouse), this protein is Lysyl oxidase homolog 2 (Loxl2).